Reading from the N-terminus, the 310-residue chain is uncharacterized protein (310 aa).

This is an uncharacterized protein from Archaeoglobus fulgidus (strain ATCC 49558 / DSM 4304 / JCM 9628 / NBRC 100126 / VC-16).